A 380-amino-acid chain; its full sequence is Cytochrome b (380 aa).

The next 4 membrane-spanning stretches (helical) occupy residues 34-54 (FGSL…LLAA), 78-99 (WLIR…YLHI), 114-134 (WNTG…GYVL), and 179-199 (FFTL…IHLT). Heme b is bound by residues His-84 and His-98. 2 residues coordinate heme b: His-183 and His-197. His-202 contacts a ubiquinone. Transmembrane regions (helical) follow at residues 227–247 (TKDI…ALFS), 289–309 (LGGV…PLLH), 321–341 (LSQL…WIGS), and 348–368 (FIII…ILFP).

This sequence belongs to the cytochrome b family. In terms of assembly, the cytochrome bc1 complex contains 11 subunits: 3 respiratory subunits (MT-CYB, CYC1 and UQCRFS1), 2 core proteins (UQCRC1 and UQCRC2) and 6 low-molecular weight proteins (UQCRH/QCR6, UQCRB/QCR7, UQCRQ/QCR8, UQCR10/QCR9, UQCR11/QCR10 and a cleavage product of UQCRFS1). This cytochrome bc1 complex then forms a dimer. It depends on heme b as a cofactor.

The protein resides in the mitochondrion inner membrane. In terms of biological role, component of the ubiquinol-cytochrome c reductase complex (complex III or cytochrome b-c1 complex) that is part of the mitochondrial respiratory chain. The b-c1 complex mediates electron transfer from ubiquinol to cytochrome c. Contributes to the generation of a proton gradient across the mitochondrial membrane that is then used for ATP synthesis. The polypeptide is Cytochrome b (MT-CYB) (Eudyptes chrysolophus (Macaroni penguin)).